Consider the following 308-residue polypeptide: Aspartate carbamoyltransferase catalytic subunit (308 aa).

Arginine 57 and threonine 58 together coordinate carbamoyl phosphate. Residue lysine 86 coordinates L-aspartate. Positions 107, 135, and 138 each coordinate carbamoyl phosphate. L-aspartate is bound by residues arginine 168 and arginine 228. Residues leucine 267 and proline 268 each coordinate carbamoyl phosphate.

It belongs to the aspartate/ornithine carbamoyltransferase superfamily. ATCase family. In terms of assembly, heterododecamer (2C3:3R2) of six catalytic PyrB chains organized as two trimers (C3), and six regulatory PyrI chains organized as three dimers (R2).

It carries out the reaction carbamoyl phosphate + L-aspartate = N-carbamoyl-L-aspartate + phosphate + H(+). The protein operates within pyrimidine metabolism; UMP biosynthesis via de novo pathway; (S)-dihydroorotate from bicarbonate: step 2/3. Functionally, catalyzes the condensation of carbamoyl phosphate and aspartate to form carbamoyl aspartate and inorganic phosphate, the committed step in the de novo pyrimidine nucleotide biosynthesis pathway. This is Aspartate carbamoyltransferase catalytic subunit from Leptospira borgpetersenii serovar Hardjo-bovis (strain JB197).